The following is a 392-amino-acid chain: CD2 homolog (392 aa).

A signal peptide spans 1–16 (MIIKLIFLICFKIVLS). Residues 17 to 222 (IDNKTKFNET…YLDFFQVTSY (206 aa)) lie on the Extracellular side of the membrane. N-linked (GlcNAc...) asparagine; by host glycans are attached at residues Asn39, Asn88, Asn92, Asn106, Asn148, Asn159, Asn183, Asn191, Asn198, and Asn204. Cystine bridges form between Cys137-Cys205 and Cys144-Cys188. The helical transmembrane segment at 223–243 (IFYMIIFIVTGITVSILISII) threads the bilayer. Topologically, residues 244–392 (TFLFIRKRKH…ISLIHVDRII (149 aa)) are cytoplasmic. A disordered region spans residues 258 to 290 (ESPPPESNEEEQQCHHDTTSIHEPSPREPLLPK). A compositionally biased stretch (basic and acidic residues) spans 269-283 (QQCHHDTTSIHEPSP). Repeat copies occupy residues 319–324 (KPCPPP), 325–330 (KPCPPP), 331–336 (KPCPPP), 337–342 (KPCPPS), and 343–348 (KPCPPP). Residues 319–348 (KPCPPPKPCPPPKPCPPPKPCPPSKPCPPP) form a 5 X 6 AA tandem repeats of K-P-C-[PRS]-[P]-[PS] region. Positions 328-357 (PPPKPCPPPKPCPPSKPCPPPEPYSPPKPC) are disordered.

Belongs to the asfivirus CD2 homolog protein family. As to quaternary structure, both glycosylated and nonglycosylated forms interact (via C-terminus) with the host AP-1 complex. In terms of processing, cleaved into two fragments of 63 kDa and 26 kDa containing respectively the glycosylated N-terminus and the nonglycosylated C-terminus. A full-length 89-kDa glycosylated form also exists.

The protein localises to the host cell membrane. It localises to the virion membrane. It is found in the host Golgi apparatus. Its function is as follows. May play an immunosuppressive role by inhibiting lymphocyte proliferation and subsequently facilitating viral replication and generalization of infection. Responsible for viral hemadsorption, which may help viral spread. Increases virus replication in the tick vector at the step of virus uptake or replication in the tick gut. May play a role in the host Golgi reorganization to yield viral factories. May play a role in host cell penetration. The sequence is that of CD2 homolog from Ornithodoros (relapsing fever ticks).